We begin with the raw amino-acid sequence, 62 residues long: DNA-directed RNA polymerase subunit Rpo10 (62 aa).

Zn(2+)-binding residues include Cys6, Cys9, Cys43, and Cys44.

It belongs to the archaeal Rpo10/eukaryotic RPB10 RNA polymerase subunit family. As to quaternary structure, part of the RNA polymerase complex. The cofactor is Zn(2+).

It is found in the cytoplasm. The catalysed reaction is RNA(n) + a ribonucleoside 5'-triphosphate = RNA(n+1) + diphosphate. Its function is as follows. DNA-dependent RNA polymerase (RNAP) catalyzes the transcription of DNA into RNA using the four ribonucleoside triphosphates as substrates. This is DNA-directed RNA polymerase subunit Rpo10 from Methanosarcina acetivorans (strain ATCC 35395 / DSM 2834 / JCM 12185 / C2A).